The primary structure comprises 173 residues: RNA pyrophosphohydrolase (173 aa).

In terms of domain architecture, Nudix hydrolase spans 11–164 (PYRRSVGILV…KKHVYMKIVN (154 aa)). The Nudix box signature appears at 52-73 (GGIDENEEPLDAARRELYEETG).

The protein belongs to the Nudix hydrolase family. RppH subfamily. A divalent metal cation serves as cofactor.

Functionally, accelerates the degradation of transcripts by removing pyrophosphate from the 5'-end of triphosphorylated RNA, leading to a more labile monophosphorylated state that can stimulate subsequent ribonuclease cleavage. In Bartonella henselae (strain ATCC 49882 / DSM 28221 / CCUG 30454 / Houston 1) (Rochalimaea henselae), this protein is RNA pyrophosphohydrolase.